We begin with the raw amino-acid sequence, 360 residues long: CFA/I fimbrial subunit E (360 aa).

It is found in the fimbrium. This is CFA/I fimbrial subunit E (cfaE) from Escherichia coli.